We begin with the raw amino-acid sequence, 612 residues long: Peroxisomal carnitine O-octanoyltransferase (612 aa).

Methionine 1 is modified (N-acetylmethionine). N6-succinyllysine occurs at positions 40 and 57. Histidine 327 (proton acceptor) is an active-site residue. CoA-binding positions include lysine 406 and 410-417; that span reads KEKQLHPD. N6-acetyllysine; alternate is present on lysine 406. Residue lysine 406 is modified to N6-succinyllysine; alternate. (R)-carnitine is bound by residues tyrosine 439, threonine 441, and threonine 452. Residues 610–612 carry the Microbody targeting signal motif; it reads PHL.

Belongs to the carnitine/choline acetyltransferase family. In terms of assembly, monomer.

It localises to the peroxisome. It catalyses the reaction octanoyl-CoA + (R)-carnitine = O-octanoyl-(R)-carnitine + CoA. The enzyme catalyses 4,8-dimethylnonanoyl-CoA + (R)-carnitine = O-4,8-dimethylnonanoyl-(R)-carnitine + CoA. It participates in lipid metabolism; fatty acid beta-oxidation. Its function is as follows. Beta-oxidation of fatty acids. The highest activity concerns the C6 to C10 chain length substrate. The sequence is that of Peroxisomal carnitine O-octanoyltransferase (CROT) from Bos taurus (Bovine).